Consider the following 497-residue polypeptide: Keratin, type II cytoskeletal 8 (497 aa).

The tract at residues threonine 2–glutamate 108 is head. The tract at residues glutamate 109–threonine 149 is coil 1A. The IF rod domain occupies glutamate 109–leucine 421. The interval glutamine 145–tyrosine 162 is linker 1. Residues isoleucine 163–leucine 254 form a coil 1B region. Positions glutamine 255–isoleucine 278 are linker 12. Residues isoleucine 279–glutamate 417 are coil 2. The segment at glutamate 418–glutamate 497 is tail.

It belongs to the intermediate filament family. In terms of assembly, heterotetramer of two type I and two type II keratins. Keratin-8 associates with keratin-18. In terms of tissue distribution, expressed in skin.

The protein localises to the cytoplasm. The protein resides in the nucleus. It is found in the nucleoplasm. It localises to the nucleus matrix. Functionally, together with KRT19, helps to link the contractile apparatus to dystrophin at the costameres of striated muscle. The chain is Keratin, type II cytoskeletal 8 from Protopterus aethiopicus (Marbled lungfish).